Consider the following 226-residue polypeptide: Putative pyridoxamine 5'-phosphate oxidase (226 aa).

A pyridoxal 5'-phosphate-binding site is contributed by 16 to 19 (LNSH). Position 72–75 (72–75 (RMVL)) interacts with FMN. Lysine 77 serves as a coordination point for pyridoxal 5'-phosphate. FMN-binding positions include 87–88 (YT), 93–94 (RK), and glutamine 116. Positions 134, 138, and 142 each coordinate pyridoxal 5'-phosphate. FMN is bound by residues 151–152 (QS) and tryptophan 199. Residue 205–207 (RLH) participates in pyridoxal 5'-phosphate binding. Arginine 209 provides a ligand contact to FMN.

It belongs to the pyridoxamine 5'-phosphate oxidase family. Homodimer. FMN serves as cofactor.

It catalyses the reaction pyridoxamine 5'-phosphate + O2 + H2O = pyridoxal 5'-phosphate + H2O2 + NH4(+). It carries out the reaction pyridoxine 5'-phosphate + O2 = pyridoxal 5'-phosphate + H2O2. Its pathway is cofactor metabolism; pyridoxal 5'-phosphate salvage; pyridoxal 5'-phosphate from pyridoxamine 5'-phosphate: step 1/1. It functions in the pathway cofactor metabolism; pyridoxal 5'-phosphate salvage; pyridoxal 5'-phosphate from pyridoxine 5'-phosphate: step 1/1. Functionally, catalyzes the oxidation of either pyridoxine 5'-phosphate (PNP) or pyridoxamine 5'-phosphate (PMP) into pyridoxal 5'-phosphate (PLP). In Caenorhabditis elegans, this protein is Putative pyridoxamine 5'-phosphate oxidase.